A 223-amino-acid polypeptide reads, in one-letter code: N-terminal Xaa-Pro-Lys N-methyltransferase 1 (223 aa).

At Met1 the chain carries N-acetylmethionine. Position 2 is an N-acetylthreonine; in N-terminal Xaa-Pro-Lys N-methyltransferase 1, N-terminally processed (Thr2). S-adenosyl-L-methionine-binding positions include Gly69, Arg74, 91–93 (DVT), 119–120 (LQ), and Gln135.

It belongs to the methyltransferase superfamily. NTM1 family.

It localises to the nucleus. The enzyme catalyses N-terminal L-alanyl-L-prolyl-L-lysyl-[protein] + 3 S-adenosyl-L-methionine = N-terminal N,N,N-trimethyl-L-alanyl-L-prolyl-L-lysyl-[protein] + 3 S-adenosyl-L-homocysteine + 3 H(+). The catalysed reaction is N-terminal L-seryl-L-prolyl-L-lysyl-[protein] + 3 S-adenosyl-L-methionine = N-terminal N,N,N-trimethyl-L-seryl-L-prolyl-L-lysyl-[protein] + 3 S-adenosyl-L-homocysteine + 3 H(+). It catalyses the reaction N-terminal L-prolyl-L-prolyl-L-lysyl-[protein] + 2 S-adenosyl-L-methionine = N-terminal N,N-dimethyl-L-prolyl-L-prolyl-L-lysyl-[protein] + 2 S-adenosyl-L-homocysteine + 2 H(+). In terms of biological role, distributive alpha-N-methyltransferase that methylates the N-terminus of target proteins containing the N-terminal motif [Ala/Gly/Pro/Ser]-Pro-Lys when the initiator Met is cleaved. Specifically catalyzes mono-, di- or tri-methylation of the exposed alpha-amino group of the Ala, Gly or Ser residue in the [Ala/Gly/Ser]-Pro-Lys motif and mono- or di-methylation of Pro in the Pro-Pro-Lys motif. Some of the substrates may be primed by NTMT2-mediated monomethylation. Catalyzes the trimethylation of the N-terminal Gly in CENPA (after removal of Met-1). Responsible for the N-terminal methylation of KLHL31, MYL2, MYL3, RB1, RCC1, RPL23A and SET. Required during mitosis for normal bipolar spindle formation and chromosome segregation via its action on RCC1. The polypeptide is N-terminal Xaa-Pro-Lys N-methyltransferase 1 (Ntmt1) (Rattus norvegicus (Rat)).